The following is a 349-amino-acid chain: tRNA-specific 2-thiouridylase MnmA (349 aa).

Residues 7 to 14 and Leu33 each bind ATP; that span reads GLSGGVDS. The Nucleophile role is filled by Cys94. Cys94 and Cys193 are disulfide-bonded. Residue Gly119 coordinates ATP. The interval 143-145 is interaction with tRNA; that stretch reads KDQ. The active-site Cysteine persulfide intermediate is Cys193. Residues 298–299 are interaction with tRNA; sequence RY.

The protein belongs to the MnmA/TRMU family.

Its subcellular location is the cytoplasm. The enzyme catalyses S-sulfanyl-L-cysteinyl-[protein] + uridine(34) in tRNA + AH2 + ATP = 2-thiouridine(34) in tRNA + L-cysteinyl-[protein] + A + AMP + diphosphate + H(+). Functionally, catalyzes the 2-thiolation of uridine at the wobble position (U34) of tRNA, leading to the formation of s(2)U34. The protein is tRNA-specific 2-thiouridylase MnmA of Rippkaea orientalis (strain PCC 8801 / RF-1) (Cyanothece sp. (strain PCC 8801)).